Reading from the N-terminus, the 487-residue chain is Putative B3 domain-containing protein At1g78640 (487 aa).

2 DNA-binding regions (TF-B3) span residues 171-269 and 379-474; these read RLLL…QQGT and RLTL…LFRV.

It is found in the nucleus. The polypeptide is Putative B3 domain-containing protein At1g78640 (Arabidopsis thaliana (Mouse-ear cress)).